A 709-amino-acid chain; its full sequence is Elongation factor G (709 aa).

The tr-type G domain occupies 10–295; it reads NQIRNIGIMA…AVVDYLPSPE (286 aa). GTP-binding positions include 19–26, 91–95, and 145–148; these read AHIDAGKT, DTPGH, and NKMD.

The protein belongs to the TRAFAC class translation factor GTPase superfamily. Classic translation factor GTPase family. EF-G/EF-2 subfamily.

It is found in the cytoplasm. Catalyzes the GTP-dependent ribosomal translocation step during translation elongation. During this step, the ribosome changes from the pre-translocational (PRE) to the post-translocational (POST) state as the newly formed A-site-bound peptidyl-tRNA and P-site-bound deacylated tRNA move to the P and E sites, respectively. Catalyzes the coordinated movement of the two tRNA molecules, the mRNA and conformational changes in the ribosome. The polypeptide is Elongation factor G (Bifidobacterium adolescentis (strain ATCC 15703 / DSM 20083 / NCTC 11814 / E194a)).